Here is a 373-residue protein sequence, read N- to C-terminus: Glutamine synthetase (373 aa).

Position 2 is an N-acetylalanine (alanine 2). The segment at 2 to 25 (ATSASSHLNKGIKQVYMSLPQGEK) is required for glutamine-induced ubiquitination by CRL4(CRBN) and proteasomal degradation. N6-acetyllysine occurs at positions 11 and 14. In terms of domain architecture, GS beta-grasp spans 24–106 (EKVQAMYIWI…VFCEVFKYNR (83 aa)). Tyrosine 104 bears the Phosphotyrosine mark. The GS catalytic domain maps to 113-373 (LRHTCKRIMD…TGDEPFQYKN (261 aa)). Position 134 (glutamate 134) interacts with ATP. Residues glutamate 134, glutamate 136, glutamate 196, and glutamate 203 each contribute to the Mn(2+) site. Position 203 to 208 (203 to 208 (EFQIGP)) interacts with ATP. 246–247 (NW) provides a ligand contact to L-glutamate. Histidine 253 is a binding site for Mn(2+). ATP-binding positions include 255–257 (NFS), arginine 319, and arginine 324. Position 319 (arginine 319) interacts with L-glutamate. 336–338 (YFE) is an ADP binding site. Glutamate 338 contributes to the Mn(2+) binding site. Position 340 (arginine 340) interacts with L-glutamate. Position 343 is a phosphoserine (serine 343).

It belongs to the glutamine synthetase family. In terms of assembly, decamer; composed of two pentamers. Interacts with PALMD. Interacts with RHOJ. Interacts with BEST2; this interaction tethers a fraction of GLUL to the membrane, causing a decrease of cytosolic glutamine synthase (GS) activity and inhibits the chloride channel activity of BEST2 by affecting the gating at the aperture in the absence of intracellular glutamate. The cofactor is Mg(2+). It depends on Mn(2+) as a cofactor. Palmitoylated; undergoes autopalmitoylation. In terms of processing, acetylated by EP300/p300; acetylation is stimulated by increased glutamine levels and promotes ubiquitin-mediated proteasomal degradation. Post-translationally, ubiquitinated by ZNRF1. Ubiquitinated by the DCX (DDB1-CUL4-X-box) E3 ubiquitin-protein ligase complex called CRL4(CRBN), leading to proteasomal degradation.

The protein localises to the cytoplasm. It is found in the cytosol. Its subcellular location is the microsome. The protein resides in the mitochondrion. It localises to the cell membrane. The enzyme catalyses L-glutamate + NH4(+) + ATP = L-glutamine + ADP + phosphate + H(+). It catalyses the reaction L-cysteinyl-[protein] + hexadecanoyl-CoA = S-hexadecanoyl-L-cysteinyl-[protein] + CoA. Glutamine synthetase activity is inhibited by methionine sulfoximine (MSO). Its function is as follows. Glutamine synthetase that catalyzes the ATP-dependent conversion of glutamate and ammonia to glutamine. Its role depends on tissue localization: in the brain, it regulates the levels of toxic ammonia and converts neurotoxic glutamate to harmless glutamine, whereas in the liver, it is one of the enzymes responsible for the removal of ammonia. Plays a key role in ammonium detoxification during erythropoiesis: the glutamine synthetase activity is required to remove ammonium generated by porphobilinogen deaminase (HMBS) during heme biosynthesis to prevent ammonium accumulation and oxidative stress. Essential for proliferation of fetal skin fibroblasts. Independently of its glutamine synthetase activity, required for endothelial cell migration during vascular development. Involved in angiogenesis by regulating membrane localization and activation of the GTPase RHOJ, possibly by promoting RHOJ palmitoylation. May act as a palmitoyltransferase for RHOJ: able to autopalmitoylate and then transfer the palmitoyl group to RHOJ. Plays a role in ribosomal 40S subunit biogenesis. Through the interaction with BEST2, inhibits BEST2 channel activity by affecting the gating at the aperture in the absence of intracellular L-glutamate, but sensitizes BEST2 to intracellular L-glutamate, which promotes the opening of BEST2 and thus relieves its inhibitory effect on BEST2. In Sus scrofa (Pig), this protein is Glutamine synthetase.